A 433-amino-acid chain; its full sequence is Enolase (433 aa).

Q167 is a (2R)-2-phosphoglycerate binding site. E209 acts as the Proton donor in catalysis. Mg(2+)-binding residues include D246, E291, and D318. Residues K343, R372, S373, and K394 each coordinate (2R)-2-phosphoglycerate. The active-site Proton acceptor is the K343.

It belongs to the enolase family. Component of the RNA degradosome, a multiprotein complex involved in RNA processing and mRNA degradation. It depends on Mg(2+) as a cofactor.

The protein resides in the cytoplasm. Its subcellular location is the secreted. It is found in the cell surface. It catalyses the reaction (2R)-2-phosphoglycerate = phosphoenolpyruvate + H2O. It participates in carbohydrate degradation; glycolysis; pyruvate from D-glyceraldehyde 3-phosphate: step 4/5. In terms of biological role, catalyzes the reversible conversion of 2-phosphoglycerate (2-PG) into phosphoenolpyruvate (PEP). It is essential for the degradation of carbohydrates via glycolysis. The chain is Enolase from Photobacterium profundum (strain SS9).